A 358-amino-acid polypeptide reads, in one-letter code: Peptide chain release factor 1 (358 aa).

At glutamine 236 the chain carries N5-methylglutamine.

The protein belongs to the prokaryotic/mitochondrial release factor family. In terms of processing, methylated by PrmC. Methylation increases the termination efficiency of RF1.

The protein localises to the cytoplasm. Functionally, peptide chain release factor 1 directs the termination of translation in response to the peptide chain termination codons UAG and UAA. The sequence is that of Peptide chain release factor 1 from Corynebacterium glutamicum (strain ATCC 13032 / DSM 20300 / JCM 1318 / BCRC 11384 / CCUG 27702 / LMG 3730 / NBRC 12168 / NCIMB 10025 / NRRL B-2784 / 534).